Reading from the N-terminus, the 140-residue chain is MGYTIQLDKDGDYYWDDDSHDPYMRANAAAFHAAPHAAAFNAAAPHAAAFNAAAPHAAAFNAAAPHAAAFNTATHHAFHEPFIKLNLTDKNIFNGLGFILIVIFIYLLLITLQQMLTRHIYNTVQHCVKAHLDSKNLQSR.

The N-linked (GlcNAc...) asparagine; by host glycan is linked to Asn-86. The chain crosses the membrane as a helical span at residues 92 to 112; that stretch reads IFNGLGFILIVIFIYLLLITL.

It belongs to the asfivirus B117L family.

It is found in the host membrane. Its subcellular location is the virion. This is an uncharacterized protein from African swine fever virus (isolate Pig/Kenya/KEN-50/1950) (ASFV).